The following is a 176-amino-acid chain: Ribosome maturation factor RimM (176 aa).

The PRC barrel domain maps to 96–176 (PADEFYWRDL…QILVDWDPDF (81 aa)).

It belongs to the RimM family. In terms of assembly, binds ribosomal protein uS19.

The protein localises to the cytoplasm. In terms of biological role, an accessory protein needed during the final step in the assembly of 30S ribosomal subunit, possibly for assembly of the head region. Essential for efficient processing of 16S rRNA. May be needed both before and after RbfA during the maturation of 16S rRNA. It has affinity for free ribosomal 30S subunits but not for 70S ribosomes. The sequence is that of Ribosome maturation factor RimM from Shewanella baltica (strain OS223).